A 100-amino-acid polypeptide reads, in one-letter code: Urease subunit gamma (100 aa).

This sequence belongs to the urease gamma subunit family. In terms of assembly, probable heterotrimer of UreA (gamma), UreB (beta) and UreC (alpha) subunits. Three heterotrimers associate to form the active enzyme. The trimeric urease interacts with an accessory complex composed of UreD, UreF and UreG, which is required for the assembly of the nickel containing metallocenter of UreC. The UreE protein may also play a direct role in nickel transfer to the urease apoprotein.

It localises to the cytoplasm. It catalyses the reaction urea + 2 H2O + H(+) = hydrogencarbonate + 2 NH4(+). It functions in the pathway nitrogen metabolism; urea degradation; CO(2) and NH(3) from urea (urease route): step 1/1. The polypeptide is Urease subunit gamma (Proteus mirabilis (strain HI4320)).